Here is a 248-residue protein sequence, read N- to C-terminus: 4-hydroxy-tetrahydrodipicolinate reductase (248 aa).

NAD(+) is bound by residues 74-76 (GTT) and 99-102 (SANF). H134 functions as the Proton donor/acceptor in the catalytic mechanism. H135 contributes to the (S)-2,3,4,5-tetrahydrodipicolinate binding site. K138 (proton donor) is an active-site residue. Residue 144 to 145 (GT) coordinates (S)-2,3,4,5-tetrahydrodipicolinate.

Belongs to the DapB family.

The protein localises to the cytoplasm. It carries out the reaction (S)-2,3,4,5-tetrahydrodipicolinate + NAD(+) + H2O = (2S,4S)-4-hydroxy-2,3,4,5-tetrahydrodipicolinate + NADH + H(+). It catalyses the reaction (S)-2,3,4,5-tetrahydrodipicolinate + NADP(+) + H2O = (2S,4S)-4-hydroxy-2,3,4,5-tetrahydrodipicolinate + NADPH + H(+). It functions in the pathway amino-acid biosynthesis; L-lysine biosynthesis via DAP pathway; (S)-tetrahydrodipicolinate from L-aspartate: step 4/4. Functionally, catalyzes the conversion of 4-hydroxy-tetrahydrodipicolinate (HTPA) to tetrahydrodipicolinate. The sequence is that of 4-hydroxy-tetrahydrodipicolinate reductase from Chlorobium phaeobacteroides (strain BS1).